Consider the following 88-residue polypeptide: Putative membrane protein insertion efficiency factor (88 aa).

A disordered region spans residues 68–88 (VPPPNSDTRARGEADARSHRL). The span at 75–88 (TRARGEADARSHRL) shows a compositional bias: basic and acidic residues.

Belongs to the UPF0161 family.

The protein localises to the cell inner membrane. Its function is as follows. Could be involved in insertion of integral membrane proteins into the membrane. This chain is Putative membrane protein insertion efficiency factor, found in Burkholderia ambifaria (strain MC40-6).